A 581-amino-acid polypeptide reads, in one-letter code: Serine/threonine protein phosphatase 2A 55 kDa regulatory subunit B alpha isoform (581 aa).

The segment at 1 to 27 is disordered; it reads MMNPDGGDGDRLEAAGAGSSSAQQGHP. Over residues 14-25 the composition is skewed to low complexity; it reads AAGAGSSSAQQG. WD repeat units follow at residues 47–86 and 123–164; these read QEVD…DNAS and EIEE…VKQV. Positions 172–189 are enriched in low complexity; that stretch reads RSVGTGTSSSASTSSSRG. Positions 172–192 are disordered; sequence RSVGTGTSSSASTSSSRGLLP. 4 WD repeats span residues 241–279, 290–330, 349–387, and 492–530; these read AHDY…QSFN, DLTE…LCDN, EIIA…GPVS, and DFST…RKFI.

It belongs to the phosphatase 2A regulatory subunit B family. In terms of assembly, PP2A consists of a common heteromeric enzyme, composed of a catalytic subunit (subunits C), a constant regulatory subunit (subunit A), and a variety of regulatory subunits such as subunits B (the R2/B/PR55/B55, R3/B''/PR72/PR130/PR59 and R5/B'/B56 families).

Functionally, the B regulatory subunit may modulate substrate selectivity and catalytic activity, and may also direct the localization of the catalytic enzyme to a particular subcellular compartment. This is Serine/threonine protein phosphatase 2A 55 kDa regulatory subunit B alpha isoform from Oryza sativa subsp. japonica (Rice).